Reading from the N-terminus, the 355-residue chain is tRNA-specific 2-thiouridylase MnmA (355 aa).

Residues 6–13 (LLSGGVDS) and leucine 33 contribute to the ATP site. Cysteine 100 serves as the catalytic Nucleophile. Cysteine 100 and cysteine 195 are oxidised to a cystine. Glycine 123 contributes to the ATP binding site. The segment at 145 to 147 (KDQ) is interaction with tRNA. Cysteine 195 serves as the catalytic Cysteine persulfide intermediate.

Belongs to the MnmA/TRMU family.

Its subcellular location is the cytoplasm. It carries out the reaction S-sulfanyl-L-cysteinyl-[protein] + uridine(34) in tRNA + AH2 + ATP = 2-thiouridine(34) in tRNA + L-cysteinyl-[protein] + A + AMP + diphosphate + H(+). Catalyzes the 2-thiolation of uridine at the wobble position (U34) of tRNA, leading to the formation of s(2)U34. This Borrelia garinii subsp. bavariensis (strain ATCC BAA-2496 / DSM 23469 / PBi) (Borreliella bavariensis) protein is tRNA-specific 2-thiouridylase MnmA.